A 322-amino-acid polypeptide reads, in one-letter code: Putative membrane-bound redox modulator Alx (322 aa).

The Periplasmic segment spans residues 1-6 (MNTVGT). The helical transmembrane segment at 7-27 (PLLWGGFAVVVVIMLSIDLLL) threads the bilayer. The Cytoplasmic segment spans residues 28 to 43 (QGRRGAHAMSMKQAAG). A helical membrane pass occupies residues 44 to 64 (WSILWVTLSLLFNAAFWWYLA). At 65–89 (ETQGREVADPQALAFLTGYLIEKSL) the chain is on the periplasmic side. A helical transmembrane segment spans residues 90 to 110 (AVDNVFVWLMLFSYFSVPPAL). Residues 111–113 (QRR) lie on the Cytoplasmic side of the membrane. A helical membrane pass occupies residues 114–134 (VLVYGVLGAIVLRTIMIFAGT). Residue Trp-135 is a topological domain, periplasmic. A helical transmembrane segment spans residues 136–156 (LITQFEWLLYVFGAFLLFTGV). The Cytoplasmic segment spans residues 157–198 (KMALAKEDESGIGEKPMVRWLRGHLRMTDTIENEHFFVRKNG). Residues 199–219 (LLYATPLLLVLIMVEFSDVIF) traverse the membrane as a helical segment. The Periplasmic portion of the chain corresponds to 220-225 (AVDSIP). A helical membrane pass occupies residues 226–246 (AIFAVTTDPFIVLTSNLFAIL). The Cytoplasmic portion of the chain corresponds to 247-261 (GLRAMYFLLSGVAER). Residues 262-282 (FSMLKYGLAVILVFIGIKMLI) traverse the membrane as a helical segment. Topologically, residues 283-286 (VDFY) are periplasmic. Residues 287–307 (HIPIAISLGVVFGILTITLVI) traverse the membrane as a helical segment. The Cytoplasmic portion of the chain corresponds to 308 to 321 (NTWVNHQRDKKLRA).

This sequence belongs to the TerC family.

It is found in the cell inner membrane. In terms of biological role, has been proposed to be a redox modulator. The polypeptide is Putative membrane-bound redox modulator Alx (alx) (Salmonella typhi).